A 419-amino-acid chain; its full sequence is Creatine kinase S-type, mitochondrial (419 aa).

The transit peptide at 1 to 39 directs the protein to the mitochondrion; it reads MAGTFGRLLAGRVTAALFAAAGSGVLTTGYLLNQQNVKA. One can recognise a Phosphagen kinase N-terminal domain in the interval 46 to 132; it reads KLFPPSADYP…FDPVIKARHN (87 aa). One can recognise a Phosphagen kinase C-terminal domain in the interval 159 to 401; it reads YVLSSRVRTG…NYLVDCEKKL (243 aa). ATP is bound by residues 162-166, His-225, Arg-270, Arg-326, 354-359, and Asp-369; these read SSRVR and RGTGGV.

Belongs to the ATP:guanido phosphotransferase family. In terms of assembly, exists as an octamer composed of four MTCK homodimers. In terms of tissue distribution, expressed in the leg muscle and heart.

Its subcellular location is the mitochondrion inner membrane. It catalyses the reaction creatine + ATP = N-phosphocreatine + ADP + H(+). In terms of biological role, reversibly catalyzes the transfer of phosphate between ATP and various phosphogens (e.g. creatine phosphate). Creatine kinase isoenzymes play a central role in energy transduction in tissues with large, fluctuating energy demands, such as skeletal muscle, heart, brain and spermatozoa. In Gallus gallus (Chicken), this protein is Creatine kinase S-type, mitochondrial (CKMT2).